Consider the following 453-residue polypeptide: Prenyltransferase nscD (453 aa).

Positions 118, 200, 202, 271, 273, and 428 each coordinate dimethylallyl diphosphate.

Belongs to the tryptophan dimethylallyltransferase family.

Its pathway is secondary metabolite biosynthesis. Prenyltransferase; part of the gene cluster that mediates the biosynthesis of neosartoricin, a prenylated anthracenone that exhibits T-cell antiproliferative activity, suggestive of a physiological role as an immunosuppressive agent. The non-reducing polyketide synthase nscA probably synthesizes and cyclizes the decaketide backbone. The hydrolase nscB then mediates the product release through hydrolysis followed by spontaneous decarboxylation. The prenyltransferase nscD catalyzes the addition of the dimethylallyl group to the aromatic C5. The FAD-dependent monooxygenase nscC is then responsible for the stereospecific hydroxylation at C2. There is no gene encoding O-acetyltransferase in the nsc gene cluster; thus, the last step of 2-O-acetylation leading to neosartoricin may be catalyzed by an unidentified O-acetyltransferase. The sequence is that of Prenyltransferase nscD from Aspergillus fumigatus (strain ATCC MYA-4609 / CBS 101355 / FGSC A1100 / Af293) (Neosartorya fumigata).